The chain runs to 135 residues: MFRTMLKSKIHRATVTQADLHYVGSVTVDADLMDAADLIEGEQVTIVDIENGARLVTYVITGERGSGVIGINGAAAHLVHPGDLVILIAYGTMEDAEARAYRPRVVFVDADNRPIDLGVDPAYVPPDAGELLSPR.

Ser-25 functions as the Schiff-base intermediate with substrate; via pyruvic acid in the catalytic mechanism. At Ser-25 the chain carries Pyruvic acid (Ser). Thr-57 contacts substrate. Tyr-58 (proton donor) is an active-site residue. 73-75 (GAA) is a substrate binding site.

Belongs to the PanD family. Heterooctamer of four alpha and four beta subunits. Requires pyruvate as cofactor. Post-translationally, is synthesized initially as an inactive proenzyme, which is activated by self-cleavage at a specific serine bond to produce a beta-subunit with a hydroxyl group at its C-terminus and an alpha-subunit with a pyruvoyl group at its N-terminus.

The protein resides in the cytoplasm. It catalyses the reaction L-aspartate + H(+) = beta-alanine + CO2. Its pathway is cofactor biosynthesis; (R)-pantothenate biosynthesis; beta-alanine from L-aspartate: step 1/1. Catalyzes the pyruvoyl-dependent decarboxylation of aspartate to produce beta-alanine. In Mycolicibacterium vanbaalenii (strain DSM 7251 / JCM 13017 / BCRC 16820 / KCTC 9966 / NRRL B-24157 / PYR-1) (Mycobacterium vanbaalenii), this protein is Aspartate 1-decarboxylase.